Here is a 98-residue protein sequence, read N- to C-terminus: DNA-binding protein Fis (98 aa).

Positions 74-93 (QTRAATMLGINRGTLRKKLK) form a DNA-binding region, H-T-H motif.

It belongs to the transcriptional regulatory Fis family. As to quaternary structure, homodimer.

Its function is as follows. Activates ribosomal RNA transcription. Plays a direct role in upstream activation of rRNA promoters. This chain is DNA-binding protein Fis, found in Histophilus somni (strain 2336) (Haemophilus somnus).